The chain runs to 97 residues: Theromacin (97 aa).

An N-terminal signal peptide occupies residues 1 to 22 (MELKSGLSILLCFGICIAVINA). 5 disulfides stabilise this stretch: Cys-24-Cys-31, Cys-46-Cys-50, Cys-53-Cys-95, Cys-61-Cys-69, and Cys-79-Cys-81.

As to expression, coelomic liquid (at protein level). Expressed in large fat cells in contact with coelomic cavities, in intestinal epithelia and at the epidermis level.

It localises to the secreted. Its function is as follows. Has a bactericidal activity. Active against M.luteus. No activity toward E.coli and F.oxysporum. The sequence is that of Theromacin from Theromyzon tessulatum (Duck leech).